We begin with the raw amino-acid sequence, 369 residues long: Methylthioribose-1-phosphate isomerase (369 aa).

Substrate-binding positions include 54–56 (RGA), Arg95, and Gln208. The active-site Proton donor is Asp249. 259–260 (NK) provides a ligand contact to substrate.

This sequence belongs to the eIF-2B alpha/beta/delta subunits family. MtnA subfamily.

It catalyses the reaction 5-(methylsulfanyl)-alpha-D-ribose 1-phosphate = 5-(methylsulfanyl)-D-ribulose 1-phosphate. Its pathway is amino-acid biosynthesis; L-methionine biosynthesis via salvage pathway; L-methionine from S-methyl-5-thio-alpha-D-ribose 1-phosphate: step 1/6. Catalyzes the interconversion of methylthioribose-1-phosphate (MTR-1-P) into methylthioribulose-1-phosphate (MTRu-1-P). The sequence is that of Methylthioribose-1-phosphate isomerase from Desulfosudis oleivorans (strain DSM 6200 / JCM 39069 / Hxd3) (Desulfococcus oleovorans).